Reading from the N-terminus, the 108-residue chain is Small ribosomal subunit protein uS17 (108 aa).

It belongs to the universal ribosomal protein uS17 family. As to quaternary structure, part of the 30S ribosomal subunit.

In terms of biological role, one of the primary rRNA binding proteins, it binds specifically to the 5'-end of 16S ribosomal RNA. The protein is Small ribosomal subunit protein uS17 of Methanocorpusculum labreanum (strain ATCC 43576 / DSM 4855 / Z).